A 151-amino-acid polypeptide reads, in one-letter code: Large ribosomal subunit protein uL13 (151 aa).

The protein belongs to the universal ribosomal protein uL13 family. In terms of assembly, part of the 50S ribosomal subunit.

In terms of biological role, this protein is one of the early assembly proteins of the 50S ribosomal subunit, although it is not seen to bind rRNA by itself. It is important during the early stages of 50S assembly. The chain is Large ribosomal subunit protein uL13 from Rippkaea orientalis (strain PCC 8801 / RF-1) (Cyanothece sp. (strain PCC 8801)).